Here is a 257-residue protein sequence, read N- to C-terminus: 3-methyl-2-oxobutanoate hydroxymethyltransferase (257 aa).

2 residues coordinate Mg(2+): D44 and D83. 3-methyl-2-oxobutanoate-binding positions include 44-45 (DS), D83, and K113. E115 contacts Mg(2+). Residue E182 is the Proton acceptor of the active site.

This sequence belongs to the PanB family. In terms of assembly, homodecamer; pentamer of dimers. Requires Mg(2+) as cofactor.

The protein localises to the cytoplasm. The enzyme catalyses 3-methyl-2-oxobutanoate + (6R)-5,10-methylene-5,6,7,8-tetrahydrofolate + H2O = 2-dehydropantoate + (6S)-5,6,7,8-tetrahydrofolate. Its pathway is cofactor biosynthesis; (R)-pantothenate biosynthesis; (R)-pantoate from 3-methyl-2-oxobutanoate: step 1/2. In terms of biological role, catalyzes the reversible reaction in which hydroxymethyl group from 5,10-methylenetetrahydrofolate is transferred onto alpha-ketoisovalerate to form ketopantoate. This is 3-methyl-2-oxobutanoate hydroxymethyltransferase from Rippkaea orientalis (strain PCC 8801 / RF-1) (Cyanothece sp. (strain PCC 8801)).